The chain runs to 367 residues: tRNA-specific 2-thiouridylase MnmA (367 aa).

Residues 13-20 (GLSGGVDS) and Met-39 contribute to the ATP site. The interaction with target base in tRNA stretch occupies residues 99–101 (NPD). Cys-104 (nucleophile) is an active-site residue. Cys-104 and Cys-200 are oxidised to a cystine. Residue Gly-128 participates in ATP binding. The segment at 150–152 (KDQ) is interaction with tRNA. Residue Cys-200 is the Cysteine persulfide intermediate of the active site. Positions 307–308 (RY) are interaction with tRNA.

Belongs to the MnmA/TRMU family.

It is found in the cytoplasm. It carries out the reaction S-sulfanyl-L-cysteinyl-[protein] + uridine(34) in tRNA + AH2 + ATP = 2-thiouridine(34) in tRNA + L-cysteinyl-[protein] + A + AMP + diphosphate + H(+). Its function is as follows. Catalyzes the 2-thiolation of uridine at the wobble position (U34) of tRNA, leading to the formation of s(2)U34. This is tRNA-specific 2-thiouridylase MnmA from Neisseria meningitidis serogroup C (strain 053442).